We begin with the raw amino-acid sequence, 64 residues long: MIKSIILPEENTKITVGKPINDESNTKVIAIYDYREEPEEAFWVHLSNGNDLFVDNHEVIVEYE.

This Bacillus subtilis (strain 168) protein is SPbeta prophage-derived uncharacterized protein YoqI (yoqI).